The following is a 926-amino-acid chain: Coatomer subunit beta'-2 (926 aa).

WD repeat units lie at residues 13–52 (QRSE…MAKS), 55–94 (VTEL…KVKV), 97–136 (AHSD…ACTQ), 140–180 (GHSH…PNFT), 183–224 (AHQK…CVQT), 227–266 (GHTH…LENT), 269–309 (YGLE…ASMD), 351–390 (TCDL…RSFG), and 461–501 (RIDV…SHFD). The disordered stretch occupies residues 847–926 (EEESLENGDM…GTNNEGNPSA (80 aa)). Residues 868–887 (NEQRNEDDVAEHVEEHHEEK) show a composition bias toward basic and acidic residues. Acidic residues predominate over residues 888–900 (EAEEEEGIVDGDS). A compositionally biased stretch (polar residues) spans 917–926 (GTNNEGNPSA).

This sequence belongs to the WD repeat COPB2 family. Oligomeric complex that consists of at least the alpha, beta, beta', gamma, delta, epsilon and zeta subunits.

The protein resides in the cytoplasm. It localises to the golgi apparatus membrane. The protein localises to the cytoplasmic vesicle. Its subcellular location is the COPI-coated vesicle membrane. In terms of biological role, the coatomer is a cytosolic protein complex that binds to dilysine motifs and reversibly associates with Golgi non-clathrin-coated vesicles, which further mediate biosynthetic protein transport from the ER, via the Golgi up to the trans Golgi network. Coatomer complex is required for budding from Golgi membranes, and is essential for the retrograde Golgi-to-ER transport of dilysine-tagged proteins. The sequence is that of Coatomer subunit beta'-2 from Arabidopsis thaliana (Mouse-ear cress).